Reading from the N-terminus, the 439-residue chain is Aspartate--tRNA(Asp/Asn) ligase (439 aa).

Glutamate 177 is a binding site for L-aspartate. Positions 199-202 are aspartate; that stretch reads QLYK. L-aspartate is bound at residue arginine 221. ATP-binding positions include 221–223, 229–231, and glutamate 362; these read RAE and RHL. Mg(2+) contacts are provided by glutamate 362 and serine 365. L-aspartate is bound by residues serine 365 and arginine 369. 410 to 413 contacts ATP; sequence GADR.

It belongs to the class-II aminoacyl-tRNA synthetase family. Type 2 subfamily. Homodimer. Requires Mg(2+) as cofactor.

It is found in the cytoplasm. The catalysed reaction is tRNA(Asx) + L-aspartate + ATP = L-aspartyl-tRNA(Asx) + AMP + diphosphate. In terms of biological role, aspartyl-tRNA synthetase with relaxed tRNA specificity since it is able to aspartylate not only its cognate tRNA(Asp) but also tRNA(Asn). Reaction proceeds in two steps: L-aspartate is first activated by ATP to form Asp-AMP and then transferred to the acceptor end of tRNA(Asp/Asn). This chain is Aspartate--tRNA(Asp/Asn) ligase, found in Methanosphaera stadtmanae (strain ATCC 43021 / DSM 3091 / JCM 11832 / MCB-3).